The following is a 151-amino-acid chain: Ribosome maturation factor RimP (151 aa).

Belongs to the RimP family.

The protein localises to the cytoplasm. Functionally, required for maturation of 30S ribosomal subunits. The polypeptide is Ribosome maturation factor RimP (Persephonella marina (strain DSM 14350 / EX-H1)).